The sequence spans 27 residues: Weak neurotoxin E3 (27 aa).

In terms of tissue distribution, expressed by the venom gland.

Its subcellular location is the secreted. Functionally, binds to muscle nicotinic acetylcholine receptor (nAChR) and inhibit acetylcholine from binding to the receptor, thereby impairing neuromuscular transmission. The polypeptide is Weak neurotoxin E3 (Micrurus pyrrhocryptus (Coral snake)).